The primary structure comprises 382 residues: Gap junction alpha-1 protein (382 aa).

Over 2 to 23 the chain is Cytoplasmic; sequence GDWSALGKLLDKVQAYSTAGGK. Phosphoserine is present on S5. The chain crosses the membrane as a helical span at residues 24–44; sequence VWLSVLFIFRILLLGTAVESA. Over 45 to 76 the chain is Extracellular; that stretch reads WGDEQSAFRCNTQQPGCENVCYDKSFPISHVR. 2 cysteine pairs are disulfide-bonded: C54–C192 and C187–C198. Residues 77–97 form a helical membrane-spanning segment; sequence FWVLQIIFVSVPTLLYLAHVF. The Cytoplasmic segment spans residues 98-155; it reads YVMRKEEKLNKKEEELKVAQTDGVNVEMHLKQIEIKKFKYGIEEHGKVKMRGGLLRTY. Residue K144 forms a Glycyl lysine isopeptide (Lys-Gly) (interchain with G-Cter in SUMO) linkage. Residues 156–176 traverse the membrane as a helical segment; it reads IISILFKSVFEVAFLLIQWYI. The Extracellular segment spans residues 177-207; sequence YGFSLSAVYTCKRDPCPHQVDCFLSRPTEKT. The chain crosses the membrane as a helical span at residues 208-228; the sequence is IFIIFMLVVSLVSLALNIIEL. At 229 to 382 the chain is on the cytoplasmic side; the sequence is FYVFFKGVKD…SRPRPDDLEI (154 aa). K237 participates in a covalent cross-link: Glycyl lysine isopeptide (Lys-Gly) (interchain with G-Cter in SUMO). The tract at residues 244 to 382 is interaction with NOV; it reads SDPYHATTGP…SRPRPDDLEI (139 aa). Phosphotyrosine is present on Y247. Phosphoserine is present on residues S255, S257, and S262. Residues 264–382 are interaction with UBQLN4; the sequence is KYAYFNGCSS…SRPRPDDLEI (119 aa). C271 is subject to S-nitrosocysteine. T275 carries the post-translational modification Phosphothreonine. Residues S306, S314, and S325 each carry the phosphoserine modification. Over residues 317–332 the composition is skewed to polar residues; it reads QNRMGQAGSTISNSHA. The tract at residues 317–382 is disordered; that stretch reads QNRMGQAGST…SRPRPDDLEI (66 aa). T326 is subject to Phosphothreonine. S328, S330, and S365 each carry phosphoserine. A compositionally biased stretch (low complexity) spans 362–374; sequence RPSSRASSRASSR. S368 is subject to Phosphoserine; by PKC/PRKCG and PKC/PRKCD. 2 positions are modified to phosphoserine: S369 and S373.

It belongs to the connexin family. Alpha-type (group II) subfamily. As to quaternary structure, a connexon is composed of a hexamer of connexins. Interacts with SGSM3. Interacts with RIC1/CIP150. Interacts with CNST and CSNK1D. Interacts (via C-terminus) with TJP1. Interacts (via C-terminus) with SRC (via SH3 domain). Interacts (not ubiquitinated) with UBQLN4 (via UBA domain). Interacts with NOV. Interacts with TMEM65. Interacts with ANK3/ANKG and PKP2. Post-translationally, contains at least one intramolecular disulfide bond. Phosphorylation at Ser-325, Ser-328 and Ser-330 by CK1 modulates gap junction assembly. Phosphorylated at Ser-368 by PRKCG; phosphorylation induces disassembly of gap junction plaques and inhibition of gap junction activity. Phosphorylation at Ser-368 by PRKCD triggers its internalization into small vesicles leading to proteasome-mediated degradation. In terms of processing, sumoylated with SUMO1, SUMO2 and SUMO3, which may regulate the level of functional Cx43 gap junctions at the plasma membrane. May be desumoylated by SENP1 or SENP2. Post-translationally, S-nitrosylation at Cys-271 is enriched at the muscle endothelial gap junction in arteries, it augments channel permeability and may regulate of smooth muscle cell to endothelial cell communication. Acetylated in the developing cortex; leading to delocalization from the cell membrane. Detected in ventricle and atrium (at protein level).

The protein localises to the cell membrane. Its subcellular location is the cell junction. It localises to the gap junction. It is found in the endoplasmic reticulum. Its function is as follows. Gap junction protein that acts as a regulator of bladder capacity. A gap junction consists of a cluster of closely packed pairs of transmembrane channels, the connexons, through which materials of low MW diffuse from one cell to a neighboring cell. Negative regulator of bladder functional capacity: acts by enhancing intercellular electrical and chemical transmission, thus sensitizing bladder muscles to cholinergic neural stimuli and causing them to contract. May play a role in cell growth inhibition through the regulation of NOV expression and localization. Plays an essential role in gap junction communication in the ventricles. This chain is Gap junction alpha-1 protein (Gja1), found in Rattus norvegicus (Rat).